The sequence spans 556 residues: MALGLFRVCLVVVTAIINHPLLFPRENTTVPENEEEIIRQMQAHQEKLQLEQLRLEEEMARLAADKEAEKEALERVAEEGQQQNESRTAWDLWSTLCMILFLVIEVWRQDHQDAPSPECLGSDEDELPDLEGAPLRGLTLPNRATLDHFYERCIRGATADAARTREFVEGFVDDLLEALRSLCSRDSDMEVEDFIGVDSMYENWQVNKPLLCDLFVPFMPPEPYHFHPELWCSSRSVPLDRQGYGQIKVVRADEDTLGCICGKTKLGEDMLCLLHGRNNVVHHGSKAADPLCAPNSPYLDTMRVMKWFQTALTRAWHRIEHKYEFDLAFGQLDTPGSLKIRFRSGKFMPFNLIPVIQCDDSDLYFVSHLAREPGGGTRASSTDWLLSFAVYERHFLRVTSKALPEGACHLSCLQIASFLLSKQSRLTGPSGLGSYHLKTALLHLLLARRPADWKAEQLDARLHELLCFLEKSLLEKKLQHFFIGNRKVPQAMGLPEAVRRAEPLNLFRPFVLQRSLYRKTVDSFYEMLKNAPALISEYSLHIPSDHASLPPKTVIL.

Residues 1 to 15 (MALGLFRVCLVVVTA) form the signal peptide. Residues 16-88 (IINHPLLFPR…EGQQQNESRT (73 aa)) lie on the Extracellular side of the membrane. 2 N-linked (GlcNAc...) asparagine glycosylation sites follow: Asn-27 and Asn-84. Residues 32–87 (ENEEEIIRQMQAHQEKLQLEQLRLEEEMARLAADKEAEKEALERVAEEGQQQNESR) adopt a coiled-coil conformation. A helical transmembrane segment spans residues 89 to 107 (AWDLWSTLCMILFLVIEVW). Residues 108-556 (RQDHQDAPSP…ASLPPKTVIL (449 aa)) lie on the Cytoplasmic side of the membrane.

The protein belongs to the ITPRIP family. As to quaternary structure, interacts with ITPR.

The protein resides in the cell membrane. The protein localises to the nucleus outer membrane. Enhances Ca(2+)-mediated inhibition of inositol 1,4,5-triphosphate receptor (ITPR) Ca(2+) release. This Bos taurus (Bovine) protein is Inositol 1,4,5-trisphosphate receptor-interacting protein (ITPRIP).